A 117-amino-acid chain; its full sequence is UPF0642 protein C32H8.05 (117 aa).

The segment at 39 to 117 (DQVNDLTKSS…SNFSKFLKKK (79 aa)) is disordered. The segment covering 93-106 (KWAKKHLKKGKRAK) has biased composition (basic residues). Low complexity predominate over residues 107-117 (NSNFSKFLKKK).

It belongs to the UPF0642 family.

The protein localises to the nucleus. The protein resides in the nucleolus. This Schizosaccharomyces pombe (strain 972 / ATCC 24843) (Fission yeast) protein is UPF0642 protein C32H8.05.